We begin with the raw amino-acid sequence, 398 residues long: tRNA-specific 2-thiouridylase MnmA (398 aa).

ATP contacts are provided by residues 20–27 (AMSGGVDS) and Leu46. The active-site Nucleophile is the Cys114. The cysteines at positions 114 and 210 are disulfide-linked. Gly138 serves as a coordination point for ATP. Residues 160-162 (RDQ) form an interaction with tRNA region. Cys210 acts as the Cysteine persulfide intermediate in catalysis.

It belongs to the MnmA/TRMU family.

It localises to the cytoplasm. It catalyses the reaction S-sulfanyl-L-cysteinyl-[protein] + uridine(34) in tRNA + AH2 + ATP = 2-thiouridine(34) in tRNA + L-cysteinyl-[protein] + A + AMP + diphosphate + H(+). Functionally, catalyzes the 2-thiolation of uridine at the wobble position (U34) of tRNA, leading to the formation of s(2)U34. The polypeptide is tRNA-specific 2-thiouridylase MnmA (Brucella abortus (strain S19)).